A 580-amino-acid chain; its full sequence is Microcin-J25 export ATP-binding/permease protein McjD (580 aa).

The next 6 membrane-spanning stretches (helical) occupy residues 25–45 (FFSMLFITSLSSIIISISPLI), 66–86 (VLLACLYMFCVISNKASVFLF), 143–163 (VSQNILSPVIQLISTIVVVLS), 167–187 (WFSAGVFFLYILVFVIFNTRL), 261–281 (AVILFGSVFIYNILGVLNGVV), and 286–306 (FIMITSYIILLSTPVENIGAL). An ABC transmembrane type-1 domain is found at 25–312 (FFSMLFITSL…IGALLSEIRQ (288 aa)). One can recognise an ABC transporter domain in the interval 345 to 578 (LSIRELSFSY…NEYISGLASV (234 aa)). ATP is bound at residue 378–385 (GPSGSGKS).

Belongs to the ABC transporter superfamily. As to quaternary structure, homodimer.

It localises to the cell inner membrane. Functionally, is able to protect a cell, which harbors the plasmid pTUC100 encoding microcin J25, against microcin J25. Is required for microcin J25 export out of the producing cells. The sequence is that of Microcin-J25 export ATP-binding/permease protein McjD (mcjD) from Escherichia coli.